The primary structure comprises 44 residues: Opistoporin-2 (44 aa).

As to expression, expressed by the venom gland.

It is found in the secreted. Its subcellular location is the target cell membrane. Functionally, at high concentrations, acts as a pore former in cellular membranes and causes the leakage of the cells. At submicromolar concentrations, degranulates granulocytes and has a weak hemolytic activity against human erythrocytes. Also strongly inhibits the production of superoxide anions. Has a strong antibacterial activity against Gram-negative bacteria but is less active against Gram-positive bacteria. Also has antifungal activity. The polypeptide is Opistoporin-2 (Opistophthalmus carinatus (African yellow leg scorpion)).